The primary structure comprises 452 residues: 1,3-beta-glucanosyltransferase gel1 (452 aa).

The first 19 residues, 1–19 (MKASAVTAALAVGASTVLA), serve as a signal peptide directing secretion. Cysteines 71 and 100 form a disulfide. (1,3-beta-D-glucosyl)n is bound by residues Tyr89, Asn159, Glu160, Asp201, and Arg206. Residue Glu160 is the Proton donor of the active site. 2 disulfide bridges follow: Cys215-Cys345 and Cys233-Cys264. N-linked (GlcNAc...) asparagine glycosylation is present at Asn249. The Nucleophile role is filled by Glu261. Residue Tyr292 coordinates (1,3-beta-D-glucosyl)n. Positions 325–340 (EKTSNPSGDGNYNKTG) are enriched in polar residues. Residues 325–419 (EKTSNPSGDG…SGTSTSSKGA (95 aa)) form a disordered region. Asn337 is a glycosylation site (N-linked (GlcNAc...) asparagine). Low complexity predominate over residues 393–419 (STATAEPGSGSATGSSSSGTSTSSKGA). Ala419 is lipidated: GPI-like-anchor amidated alanine. Positions 420–452 (AAGLTVPSLTMAPVVVGAVTLLSTVFGAGLVLL) are cleaved as a propeptide — removed in mature form.

The protein belongs to the glycosyl hydrolase 72 family. In terms of processing, the GPI-like anchor contains a phosphoceramide lipid group. The anchor position has not been determined.

The protein localises to the cell membrane. Its function is as follows. Splits internally a 1,3-beta-glucan molecule and transfers the newly generated reducing end (the donor) to the non-reducing end of another 1,3-beta-glucan molecule (the acceptor) forming a 1,3-beta linkage, resulting in the elongation of 1,3-beta-glucan chains in the cell wall. Involved in cell wall morphogenesis. This chain is 1,3-beta-glucanosyltransferase gel1 (gel1), found in Aspergillus fumigatus (strain CBS 144.89 / FGSC A1163 / CEA10) (Neosartorya fumigata).